A 113-amino-acid polypeptide reads, in one-letter code: Urease subunit beta (113 aa).

Belongs to the urease beta subunit family. As to quaternary structure, heterotrimer of UreA (gamma), UreB (beta) and UreC (alpha) subunits. Three heterotrimers associate to form the active enzyme.

The protein resides in the cytoplasm. The catalysed reaction is urea + 2 H2O + H(+) = hydrogencarbonate + 2 NH4(+). It participates in nitrogen metabolism; urea degradation; CO(2) and NH(3) from urea (urease route): step 1/1. The protein is Urease subunit beta of Nitrosospira multiformis (strain ATCC 25196 / NCIMB 11849 / C 71).